The following is a 267-amino-acid chain: Meiosis-specific protein ISC10 (267 aa).

Residues 1-13 (MDVDERLHQDENQ) are compositionally biased toward basic and acidic residues. The disordered stretch occupies residues 1 to 26 (MDVDERLHQDENQTHPFSQKKSSSFL). Polar residues predominate over residues 14-25 (THPFSQKKSSSF).

In terms of biological role, indispensable for spore formation. The chain is Meiosis-specific protein ISC10 (ISC10) from Saccharomyces cerevisiae (strain ATCC 204508 / S288c) (Baker's yeast).